A 296-amino-acid polypeptide reads, in one-letter code: UDP-N-acetylenolpyruvoylglucosamine reductase (296 aa).

The 166-residue stretch at 26 to 191 folds into the FAD-binding PCMH-type domain; sequence RIGGPANYFK…LSATFRLSKS (166 aa). Arg170 is an active-site residue. Cys218 acts as the Proton donor in catalysis. Residue Glu287 is part of the active site.

This sequence belongs to the MurB family. Requires FAD as cofactor.

The protein resides in the cytoplasm. The catalysed reaction is UDP-N-acetyl-alpha-D-muramate + NADP(+) = UDP-N-acetyl-3-O-(1-carboxyvinyl)-alpha-D-glucosamine + NADPH + H(+). Its pathway is cell wall biogenesis; peptidoglycan biosynthesis. In terms of biological role, cell wall formation. The chain is UDP-N-acetylenolpyruvoylglucosamine reductase from Chlamydia felis (strain Fe/C-56) (Chlamydophila felis).